A 149-amino-acid chain; its full sequence is NPC intracellular cholesterol transporter 2 (149 aa).

Residues 1–19 form the signal peptide; sequence MRFLTVAFLFLALSASALA. Intrachain disulfides connect C27–C140, C42–C47, and C93–C99. The N-linked (GlcNAc...) asparagine glycan is linked to N58. The residue at position 116 (K116) is an N6-acetyllysine.

It belongs to the NPC2 family. In terms of assembly, interacts with NPC1 (via the second lumenal domain) in a cholestrol-dependent manner. Interacts with NUS1/NgBR, the interaction stabilizes NCP2 and regulates cholesterol trafficking. Interacts with DHDDS. Interacts with NEDD4L (via C2 domain). Interacts with NPC1L1. In terms of tissue distribution, expressed in kidney, spleen, liver and mammary gland, but not in testis.

It is found in the secreted. Its subcellular location is the endoplasmic reticulum. It localises to the lysosome. It carries out the reaction cholesterol(in) = cholesterol(out). Intracellular cholesterol transporter which acts in concert with NPC1 and plays an important role in the egress of cholesterol from the lysosomal compartment. Unesterified cholesterol that has been released from LDLs in the lumen of the late endosomes/lysosomes is transferred by NPC2 to the cholesterol-binding pocket in the N-terminal domain of NPC1. May bind and mobilize cholesterol that is associated with membranes. NPC2 binds cholesterol with a 1:1 stoichiometry. Can bind a variety of sterols, including lathosterol, desmosterol and the plant sterols stigmasterol and beta-sitosterol. The secreted form of NCP2 regulates biliary cholesterol secretion via stimulation of ABCG5/ABCG8-mediated cholesterol transport. The protein is NPC intracellular cholesterol transporter 2 of Bos taurus (Bovine).